A 444-amino-acid polypeptide reads, in one-letter code: Protein CLP1 homolog (444 aa).

Residues Glu-33, Lys-72, and 140–145 each bind ATP; that span reads DSGKST.

It belongs to the Clp1 family. Clp1 subfamily. As to quaternary structure, interacts with PCFS4 and SYM5. Forms a complex with cleavage and polyadenylation specificity factor (CPSF) subunits CPSF30, CPSF100, PCFS1, PCFS4, PCFS5, CPSF160 and FY.

The protein localises to the nucleus. In terms of biological role, required for endonucleolytic cleavage during polyadenylation-dependent pre-mRNA 3'-end formation. Functions in gametophyte, embryo and postembryotic development. This is Protein CLP1 homolog (CLPS3) from Arabidopsis thaliana (Mouse-ear cress).